The sequence spans 434 residues: MTIPYLADLKDQTECKTCPKILTRCKGSLYKVILHEFLMTAGAYFGVFLVFRFAINETQREYAAEVFKKLKEQQNVCIPMQMMLAFFIATVADQWEKIFENVGYIENAALAVATFLPDGKEKRDNNGNVILAKVDNSNVRRNIIRYLVLSQILGIRDVSELVKKRFANYDMIKATGVLQDHEEPLLKKVPCKTYAESFVPITWIMSILQKFASKNEENLYYDTVYLEITDFYKKIIKLTRYDLIPIPLAYPQAVFLAVRIYFFFCLFTRQHLDLEENWALSHWGFPLLTTLQFIFLVGCMKVAEILLNPMGQDDENFECNYVMDKNLFVGLTIVSSEHTECPELEEVIGDDYVPWYPDDCKSKEEKNQEELKKYLESVDFQAVTSSDQGENDEVSTMMKVEQNSLLVCGREKFYEGGGFRNSDVYPKQRANYPH.

Transmembrane regions (helical) follow at residues 31–51 (KVILHEFLMTAGAYFGVFLVF), 76–96 (VCIPMQMMLAFFIATVADQWE), 244–264 (IPIPLAYPQAVFLAVRIYFFF), and 278–298 (WALSHWGFPLLTTLQFIFLVG).

It belongs to the anion channel-forming bestrophin (TC 1.A.46) family. Calcium-sensitive chloride channel subfamily. In terms of assembly, forms oligomers.

The protein localises to the cell membrane. Functionally, forms chloride channels. This is Bestrophin homolog 12 (best-12) from Caenorhabditis elegans.